A 76-amino-acid polypeptide reads, in one-letter code: KANTR integral membrane protein (76 aa).

The first 25 residues, 1–25 (MSPFSLLILVICAFSLFFLINLTRG), serve as a signal peptide directing secretion. Topologically, residues 26–34 (LSILLVFSK) are extracellular. A helical membrane pass occupies residues 35 to 55 (NQLLALLLLSIVSLFSISLIS). Residues 56–76 (ALIFFDLLPSTFFGFILLFFF) lie on the Cytoplasmic side of the membrane.

Its subcellular location is the membrane. This chain is KANTR integral membrane protein, found in Homo sapiens (Human).